The chain runs to 296 residues: Iron-sulfur cluster carrier protein (296 aa).

Over residues 1 to 17 (MSSNPFRIQNPQPQPQR) the composition is skewed to low complexity. Positions 1–23 (MSSNPFRIQNPQPQPQRQPRDLR) are disordered. 52-59 (GKGGVGKS) contributes to the ATP binding site.

This sequence belongs to the Mrp/NBP35 ATP-binding proteins family. Homodimer.

Binds and transfers iron-sulfur (Fe-S) clusters to target apoproteins. Can hydrolyze ATP. This chain is Iron-sulfur cluster carrier protein, found in Saccharolobus solfataricus (strain ATCC 35092 / DSM 1617 / JCM 11322 / P2) (Sulfolobus solfataricus).